Consider the following 135-residue polypeptide: Ribonuclease P protein component (135 aa).

The interval 115-135 is disordered; it reads TNETVSPVSDTPLPQHERGSQ.

The protein belongs to the RnpA family. As to quaternary structure, consists of a catalytic RNA component (M1 or rnpB) and a protein subunit.

The catalysed reaction is Endonucleolytic cleavage of RNA, removing 5'-extranucleotides from tRNA precursor.. RNaseP catalyzes the removal of the 5'-leader sequence from pre-tRNA to produce the mature 5'-terminus. It can also cleave other RNA substrates such as 4.5S RNA. The protein component plays an auxiliary but essential role in vivo by binding to the 5'-leader sequence and broadening the substrate specificity of the ribozyme. This is Ribonuclease P protein component from Chloroflexus aurantiacus (strain ATCC 29366 / DSM 635 / J-10-fl).